The chain runs to 307 residues: Elongation factor Ts (307 aa).

Residues 79-82 (TDFV) are involved in Mg(2+) ion dislocation from EF-Tu.

The protein belongs to the EF-Ts family.

The protein resides in the cytoplasm. Its function is as follows. Associates with the EF-Tu.GDP complex and induces the exchange of GDP to GTP. It remains bound to the aminoacyl-tRNA.EF-Tu.GTP complex up to the GTP hydrolysis stage on the ribosome. The protein is Elongation factor Ts of Bartonella henselae (strain ATCC 49882 / DSM 28221 / CCUG 30454 / Houston 1) (Rochalimaea henselae).